Reading from the N-terminus, the 212-residue chain is Peptide methionine sulfoxide reductase MsrA (212 aa).

Cysteine 52 is an active-site residue.

This sequence belongs to the MsrA Met sulfoxide reductase family.

The enzyme catalyses L-methionyl-[protein] + [thioredoxin]-disulfide + H2O = L-methionyl-(S)-S-oxide-[protein] + [thioredoxin]-dithiol. It carries out the reaction [thioredoxin]-disulfide + L-methionine + H2O = L-methionine (S)-S-oxide + [thioredoxin]-dithiol. Its function is as follows. Has an important function as a repair enzyme for proteins that have been inactivated by oxidation. Catalyzes the reversible oxidation-reduction of methionine sulfoxide in proteins to methionine. The polypeptide is Peptide methionine sulfoxide reductase MsrA (Escherichia coli (strain SMS-3-5 / SECEC)).